The following is a 317-amino-acid chain: MAKNPPENCEDCHILNAEAFKSKKICKSLKICGLVFGILALTLIVLFWGSKHFWPEVPKKAYDMEHTFYSNGEKKKIYMEIDPVTRTEIFRSGNGTDETLEVHDFKNGYTGIYFVGLQKCFIKTQIKVIPEFSEPEEEIDENEEITTTFFEQSVIWVPAEKPIENRDFLKNSKILEICDNVTMYWINPTLISVSELQDFEEEGEDLHFPANEKKGIEQNEQWVVPQVKVEKTRHARQASEEELPINDYTENGIEFDPMLDERGYCCIYCRRGNRYCRRVCEPLLGYYPYPYCYQGGRVICRVIMPCNWWVARMLGRV.

At 1 to 30 (MAKNPPENCEDCHILNAEAFKSKKICKSLK) the chain is on the cytoplasmic side. Residues 31–50 (ICGLVFGILALTLIVLFWGS) traverse the membrane as a helical; Signal-anchor for type II membrane protein segment. Over 51–317 (KHFWPEVPKK…WWVARMLGRV (267 aa)) the chain is Extracellular. Residues 93–186 (GNGTDETLEV…ICDNVTMYWI (94 aa)) form the BRICHOS domain. Asparagine 94 carries an N-linked (GlcNAc...) asparagine glycan. A disulfide bond links cysteine 120 and cysteine 178. N-linked (GlcNAc...) asparagine glycosylation is present at asparagine 180. Serine 239 is subject to Phosphoserine.

The protein belongs to the chondromodulin-1 family. In terms of tissue distribution, highly expressed in hypovascular connective tissues such as tendons. Also has strong expression in adipose tissue.

The protein resides in the membrane. The protein localises to the nucleus envelope. It localises to the cytoplasm. Functionally, may be an angiogenesis inhibitor. This Homo sapiens (Human) protein is Tenomodulin (TNMD).